Here is a 1226-residue protein sequence, read N- to C-terminus: E3 ubiquitin-protein ligase mind-bomb (1226 aa).

Over residues 1 to 12 the composition is skewed to polar residues; it reads MSCAATLSSAKD. Disordered regions lie at residues 1-42 and 66-87; these read MSCA…NTNT and GGGG…AGGV. A compositionally biased stretch (gly residues) spans 19–30; the sequence is SGGGGGGGGGGA. Composition is skewed to low complexity over residues 31–42 and 73–86; these read PTNSNTNTNTNT and GGTT…AAGG. The 69-residue stretch at 100-168 folds into the MIB/HERC2 1 domain; the sequence is VRRFSMEGVG…AYDLRILDSA (69 aa). Residues 174–226 form a ZZ-type zinc finger; the sequence is HEGTMCDTCRQQPIFGIRWKCAECINYDLCSICYHGDKHHLRHRFYRITTPGG. 8 residues coordinate Zn(2+): C179, C182, C194, C197, C203, C206, H212, and H216. The MIB/HERC2 2 domain maps to 237-315; sequence SKKVLARGIF…MADLKVVNDA (79 aa). 8 ANK repeats span residues 567–596, 600–629, 633–662, 666–695, 699–731, 735–765, 769–798, and 802–833; these read AGHT…DVEI, DGDR…DLNA, RRQT…HPSL, EGDT…DITL, NGFN…IVEE, DGYT…NMDR, NLQT…DLNI, and DGDT…KLLM. The segment at 890-919 is disordered; it reads TDDSELPGNVAGTSSSARARAASGSLNQSS. The segment covering 900 to 914 has biased composition (low complexity); it reads AGTSSSARARAASGS. 2 RING-type zinc fingers span residues 970-1005 and 1017-1052; these read CLVC…LICR and CLVC…VLCR. Residues 1159–1181 adopt a coiled-coil conformation; sequence VNNFQMDDVQKLKQQLQDIKEQT. The segment at 1183 to 1216 adopts an RING-type 3 zinc-finger fold; it reads CPVCFDRIKNMVFLCGHGTCQMCGDQIEGCPICR.

As to quaternary structure, interacts with intracellular domain of Dl and Ser. In terms of tissue distribution, ubiquitous in the wing imaginal disk (at protein level).

The protein localises to the cytoplasm. Its subcellular location is the cell cortex. It catalyses the reaction S-ubiquitinyl-[E2 ubiquitin-conjugating enzyme]-L-cysteine + [acceptor protein]-L-lysine = [E2 ubiquitin-conjugating enzyme]-L-cysteine + N(6)-ubiquitinyl-[acceptor protein]-L-lysine.. It functions in the pathway protein modification; protein ubiquitination. Functionally, E3 ubiquitin-protein ligase that mediates ubiquitination of Delta (Dl) and Serrate (Ser) receptors, which act as ligands of Notch proteins. Positively regulates the Notch signaling by ubiquitinating the intracellular domain of Dl and Ser, leading to endocytosis of Dl and Ser receptors. Regulates a subset of Notch signaling events, including wing margin specification, leg segmentation and vein determination, that are distinct from those events requiring neuralize (neur) activity. Also modulates lateral inhibition, a neur- and Dl-dependent signaling event, suggesting a distinct but partially complementary function with neur. This Drosophila melanogaster (Fruit fly) protein is E3 ubiquitin-protein ligase mind-bomb (mib1).